Here is a 270-residue protein sequence, read N- to C-terminus: uncharacterized protein (270 aa).

An N-terminal signal peptide occupies residues 1–22; the sequence is MEYIKKIALYMSVLLLIIFIGG. Residue C23 is the site of N-palmitoyl cysteine attachment. The S-diacylglycerol cysteine moiety is linked to residue C23.

The protein belongs to the staphylococcal tandem lipoprotein family.

Its subcellular location is the cell membrane. This is an uncharacterized protein from Staphylococcus aureus (strain MW2).